The following is a 184-amino-acid chain: Photosystem I assembly protein Ycf4 (184 aa).

The next 2 helical transmembrane spans lie at 22–42 and 57–77; these read FFWA…GTSS and ILFF…LFIS.

This sequence belongs to the Ycf4 family.

The protein localises to the plastid. The protein resides in the chloroplast thylakoid membrane. In terms of biological role, seems to be required for the assembly of the photosystem I complex. In Nandina domestica (Heavenly bamboo), this protein is Photosystem I assembly protein Ycf4.